Reading from the N-terminus, the 58-residue chain is Small ribosomal subunit protein bS21B (58 aa).

Belongs to the bacterial ribosomal protein bS21 family.

The chain is Small ribosomal subunit protein bS21B (rpsU2) from Nostoc sp. (strain PCC 7120 / SAG 25.82 / UTEX 2576).